The sequence spans 776 residues: Calcium-independent phospholipase A2-gamma (776 aa).

Basic and acidic residues-rich tracts occupy residues 226 to 238 (RQLQ…EESK) and 307 to 331 (LKSD…ICKD). Disordered regions lie at residues 226–274 (RQLQ…EALP) and 306–331 (KLKS…ICKD). The 196-residue stretch at 439–634 (LAIDGGGTRG…LLNNPSALAL (196 aa)) folds into the PNPLA domain. Residues 443 to 448 (GGGTRG) carry the GXGXXG motif. Residues 469-489 (LFDYICGVSTGAILAFMLGLF) traverse the membrane as a helical segment. Residues 475–479 (GVSTG) carry the GXSXG motif. The active-site Nucleophile is the serine 477. Aspartate 621 serves as the catalytic Proton acceptor. A DGA/G motif is present at residues 621–623 (DGG). N6-succinyllysine is present on lysine 730.

It localises to the endoplasmic reticulum membrane. The protein localises to the microsome membrane. Its subcellular location is the mitochondrion membrane. The protein resides in the peroxisome membrane. The catalysed reaction is a 1,2-diacyl-sn-glycero-3-phosphocholine + H2O = a 1-acyl-sn-glycero-3-phosphocholine + a fatty acid + H(+). The enzyme catalyses a 1,2-diacyl-sn-glycero-3-phosphocholine + H2O = a 2-acyl-sn-glycero-3-phosphocholine + a fatty acid + H(+). It carries out the reaction a 1,2-diacyl-sn-glycero-3-phosphoethanolamine + H2O = a 1-acyl-sn-glycero-3-phosphoethanolamine + a fatty acid + H(+). It catalyses the reaction a 1-O-(1Z-alkenyl)-2-acyl-sn-glycero-3-phosphocholine + H2O = a 1-O-(1Z-alkenyl)-sn-glycero-3-phosphocholine + a fatty acid + H(+). The catalysed reaction is a 1-acyl-sn-glycero-3-phosphocholine + H2O = sn-glycerol 3-phosphocholine + a fatty acid + H(+). The enzyme catalyses 1-acyl-2-(9Z,12Z)-octadecadienoyl-sn-glycero-3-phosphocholine + H2O = a 1-acyl-sn-glycero-3-phosphocholine + (9Z,12Z)-octadecadienoate + H(+). It carries out the reaction 1-acyl-2-(5Z,8Z,11Z,14Z-eicosatetraenoyl)-sn-glycero-3-phosphocholine + H2O = a 1-acyl-sn-glycero-3-phosphocholine + (5Z,8Z,11Z,14Z)-eicosatetraenoate + H(+). It catalyses the reaction 1-hexadecanoyl-2-(5Z,8Z,11Z,14Z-eicosatetraenoyl)-sn-glycero-3-phosphocholine + H2O = 1-hexadecanoyl-sn-glycero-3-phosphocholine + (5Z,8Z,11Z,14Z)-eicosatetraenoate + H(+). The catalysed reaction is 1-octadecanoyl-2-(9Z-octadecenoyl)-sn-glycero-3-phosphocholine + H2O = 1-octadecanoyl-sn-glycero-3-phosphocholine + (9Z)-octadecenoate + H(+). The enzyme catalyses 1-hexadecanoyl-2-(9Z-octadecenoyl)-sn-glycero-3-phosphocholine + H2O = 1-hexadecanoyl-sn-glycero-3-phosphocholine + (9Z)-octadecenoate + H(+). It carries out the reaction 1-hexadecanoyl-2-(9Z,12Z-octadecadienoyl)-sn-glycero-3-phosphocholine + H2O = (9Z,12Z)-octadecadienoate + 1-hexadecanoyl-sn-glycero-3-phosphocholine + H(+). It catalyses the reaction 1-acyl-2-(9Z,12Z)-octadecadienoyl-sn-glycero-3-phosphoethanolamine + H2O = a 1-acyl-sn-glycero-3-phosphoethanolamine + (9Z,12Z)-octadecadienoate + H(+). The catalysed reaction is 1-acyl-2-(5Z,8Z,11Z,14Z)-eicosatetraenoyl-sn-glycero-3-phosphoethanolamine + H2O = a 1-acyl-sn-glycero-3-phosphoethanolamine + (5Z,8Z,11Z,14Z)-eicosatetraenoate + H(+). The enzyme catalyses 1-hexadecanoyl-2-(5Z,8Z,11Z,14Z-eicosatetraenoyl)-sn-glycero-3-phosphoethanolamine + H2O = 1-hexadecanoyl-sn-glycero-3-phosphoethanolamine + (5Z,8Z,11Z,14Z)-eicosatetraenoate + H(+). It carries out the reaction 1-hexadecanoyl-2-(5Z,8Z,11Z,14Z-eicosatetraenoyl)-sn-glycero-3-phosphocholine + H2O = 2-(5Z,8Z,11Z,14Z)-eicosatetraenoyl-sn-glycero-3-phosphocholine + hexadecanoate + H(+). It catalyses the reaction 1-octadecanoyl-2-(9Z-octadecenoyl)-sn-glycero-3-phosphocholine + H2O = 2-(9Z-octadecenoyl)-sn-glycero-3-phosphocholine + octadecanoate + H(+). The catalysed reaction is 1-hexadecanoyl-2-(4Z,7Z,10Z,13Z,16Z,19Z-docosahexaenoyl)-sn-glycero-3-phosphocholine + H2O = 2-(4Z,7Z,10Z,13Z,16Z,19Z-docosahexaenoyl)-sn-glycero-3-phosphocholine + hexadecanoate + H(+). The enzyme catalyses 1-O-(1Z)-hexadecenyl-2 (5Z,8Z,11Z,14Z)-eicosatetraenoyl-sn-glycero-3-phosphocholine + H2O = 1-(1Z-hexadecenyl)-sn-glycero-3-phosphocholine + (5Z,8Z,11Z,14Z)-eicosatetraenoate + H(+). It carries out the reaction 1-O-(1Z-hexadecenyl)-2-(9Z-octadecenoyl)-sn-glycero-3-phosphocholine + H2O = 1-(1Z-hexadecenyl)-sn-glycero-3-phosphocholine + (9Z)-octadecenoate + H(+). It catalyses the reaction 1-hexadecanoyl-sn-glycero-3-phosphocholine + H2O = sn-glycerol 3-phosphocholine + hexadecanoate + H(+). The catalysed reaction is 1',3'-bis-[1,2-di-(9Z,12Z-octadecadienoyl)-sn-glycero-3-phospho]-glycerol + H2O = 1'-[1,2-di-(9Z,12Z-octadecadienoyl)-sn-glycero-3-phospho]-3'-[1-(9Z,12Z-octadecadienoyl)-sn-glycero-3-phospho]-glycerol + (9Z,12Z)-octadecadienoate + H(+). The enzyme catalyses 1'-[1-acyl-2-(9-hydroxy-(10E,12Z)-octadecadienoyl)-sn-glycero-3-phospho]-3'-[1,2-diacyl-sn-glycero-3-phospho]-glycerol + H2O = 9-hydroxy-(10E,12Z)-octadecadienoate + 1'-[1,2-diacyl-sn-glycero-3-phospho],3'-[1-acyl-sn-glycero-3-phospho]-glycerol + H(+). It participates in phospholipid metabolism. Its activity is regulated as follows. Calcium-independent phospholipase. Functionally, calcium-independent and membrane-bound phospholipase, that catalyzes the esterolytic cleavage of fatty acids from glycerophospholipids to yield free fatty acids and lysophospholipids, hence regulating membrane physical properties and the release of lipid second messengers and growth factors. Hydrolyzes phosphatidylethanolamine, phosphatidylcholine and probably phosphatidylinositol with a possible preference for the former. Has also a broad substrate specificity in terms of fatty acid moieties, hydrolyzing saturated and mono-unsaturated fatty acids at nearly equal rates from either the sn-1 or sn-2 position in diacyl phosphatidylcholine. However, has a weak activity toward polyunsaturated fatty acids at the sn-2 position, and thereby favors the production of 2-arachidonoyl lysophosphatidylcholine, a key branch point metabolite in eicosanoid signaling. On the other hand, can produce arachidonic acid from the sn-1 position of diacyl phospholipid and from the sn-2 position of arachidonate-containing plasmalogen substrates. Therefore, plays an important role in the mobilization of arachidonic acid in response to cellular stimuli and the generation of lipid second messengers. Can also hydrolyze lysophosphatidylcholine. In the mitochondrial compartment, catalyzes the hydrolysis and release of oxidized aliphatic chains from cardiolipin and integrates mitochondrial bioenergetics and signaling. It is essential for maintaining efficient bioenergetic mitochondrial function through tailoring mitochondrial membrane lipid metabolism and composition. This chain is Calcium-independent phospholipase A2-gamma, found in Rattus norvegicus (Rat).